Reading from the N-terminus, the 190-residue chain is NADH dehydrogenase [ubiquinone] iron-sulfur protein 3 (190 aa).

The protein belongs to the complex I 30 kDa subunit family. In terms of assembly, complex I is composed of at least 49 different subunits. This is a component of the iron-sulfur (IP) fragment of the enzyme.

Its subcellular location is the mitochondrion inner membrane. It carries out the reaction a ubiquinone + NADH + 5 H(+)(in) = a ubiquinol + NAD(+) + 4 H(+)(out). In terms of biological role, core subunit of the mitochondrial membrane respiratory chain NADH dehydrogenase (Complex I) that is believed to belong to the minimal assembly required for catalysis. Complex I functions in the transfer of electrons from NADH to the respiratory chain. The immediate electron acceptor for the enzyme is believed to be ubiquinone. In Arabidopsis thaliana (Mouse-ear cress), this protein is NADH dehydrogenase [ubiquinone] iron-sulfur protein 3 (NAD9).